The chain runs to 143 residues: Histone H2B.2, sperm (143 aa).

The disordered stretch occupies residues 1–52 (MPRSPSKSSPRKGSPRKGSPRKGSPKRGGKGAKRAGKGGRRRNVVKRRRRRR). 5 short sequence motifs (SPKK motif) span residues 4–7 (SPSK), 9–12 (SPRK), 14–17 (SPRK), 19–22 (SPRK), and 24–27 (SPKR). Residues 9–52 (SPRKGSPRKGSPRKGSPKRGGKGAKRAGKGGRRRNVVKRRRRRR) show a composition bias toward basic residues. A phosphoserine mark is found at Ser-14, Ser-19, and Ser-24. Residue Ser-130 is glycosylated (O-linked (GlcNAc) serine). Lys-138 participates in a covalent cross-link: Glycyl lysine isopeptide (Lys-Gly) (interchain with G-Cter in ubiquitin).

It belongs to the histone H2B family. In terms of assembly, the nucleosome is a histone octamer containing two molecules each of H2A, H2B, H3 and H4 assembled in one H3-H4 heterotetramer and two H2A-H2B heterodimers. The octamer wraps approximately 147 bp of DNA. Post-translationally, monoubiquitination of Lys-138 gives a specific tag for epigenetic transcriptional activation and is also prerequisite for histone H3 'Lys-4' and 'Lys-79' methylation. Phosphorylated on SPKK motifs 3, 4 and 5; which may regulate DNA binding. Dephosphorylated during maturation of spermatids to mature sperm and rephosphorylated at fertilization. In terms of processing, glcNAcylation at Ser-130 promotes monoubiquitination of Lys-138. It fluctuates in response to extracellular glucose, and associates with transcribed genes. Testis-specific.

The protein localises to the nucleus. It is found in the chromosome. In terms of biological role, core component of nucleosome. Nucleosomes wrap and compact DNA into chromatin, limiting DNA accessibility to the cellular machineries which require DNA as a template. Histones thereby play a central role in transcription regulation, DNA repair, DNA replication and chromosomal stability. DNA accessibility is regulated via a complex set of post-translational modifications of histones, also called histone code, and nucleosome remodeling. This Lytechinus pictus (Painted sea urchin) protein is Histone H2B.2, sperm.